The sequence spans 79 residues: MATGTPAAELRELTEEELVSRLRESKEELFNLRFQMATGQLDNNRRLRVVRHEIARIYTVMRERELGLATGPAGKGDAA.

Belongs to the universal ribosomal protein uL29 family.

This Nocardia farcinica (strain IFM 10152) protein is Large ribosomal subunit protein uL29.